The primary structure comprises 156 residues: MPRRREVAKRIILPDPKYGDRVVAKLVNIIMFDGKKSTAERALYGALEIVSEKVNEEPVKILKKSLDNIKPMLEVKSRRVGGSTYQVPVEVRAERRVSLAMRWLVKYANDRSEKTVTDKLAGEILDAYNNRGAAVKKREDTHKMAEANRAFAHYRW.

Belongs to the universal ribosomal protein uS7 family. Part of the 30S ribosomal subunit. Contacts proteins S9 and S11.

In terms of biological role, one of the primary rRNA binding proteins, it binds directly to 16S rRNA where it nucleates assembly of the head domain of the 30S subunit. Is located at the subunit interface close to the decoding center, probably blocks exit of the E-site tRNA. The protein is Small ribosomal subunit protein uS7 of Geotalea daltonii (strain DSM 22248 / JCM 15807 / FRC-32) (Geobacter daltonii).